A 161-amino-acid polypeptide reads, in one-letter code: Phosphopantetheine adenylyltransferase (161 aa).

Substrate is bound at residue S10. ATP is bound by residues 10-11 (SF) and H18. Substrate is bound by residues K42, A75, and R89. ATP-binding positions include 90–92 (GLR), E100, and 125–131 (LSPISSS).

This sequence belongs to the bacterial CoaD family. In terms of assembly, homohexamer. Mg(2+) is required as a cofactor.

Its subcellular location is the cytoplasm. It carries out the reaction (R)-4'-phosphopantetheine + ATP + H(+) = 3'-dephospho-CoA + diphosphate. The protein operates within cofactor biosynthesis; coenzyme A biosynthesis; CoA from (R)-pantothenate: step 4/5. Reversibly transfers an adenylyl group from ATP to 4'-phosphopantetheine, yielding dephospho-CoA (dPCoA) and pyrophosphate. This chain is Phosphopantetheine adenylyltransferase, found in Streptococcus agalactiae serotype Ia (strain ATCC 27591 / A909 / CDC SS700).